Here is a 351-residue protein sequence, read N- to C-terminus: Cytoplasmic dynein 2 light intermediate chain 1 (351 aa).

A disordered region spans residues T304–Q335. The segment covering D323–Q335 has biased composition (basic and acidic residues).

The protein belongs to the dynein light intermediate chain family. Light intermediate chain of the cytoplasmic dynein complex 2, a multisubunit complex composed at least of eleven different proteins. The cytoplasmic dynein 2 complex consists of two catalytic heavy chains (HCs) and a number of non-catalytic subunits presented by intermediate chains (ICs), light intermediate chains (LICs) and light chains (LCs). Among them, a heavy chain (DYNC2H1), two intermediate chains (DYNC2I2 and DYNC2I1), a light intermediate chain (DYNC2LI1), and a light chain (DYNLT2B) are unique to the dynein-2 complex, but a subset of light chains are also shared by dynein-1 and dynein-2 complexes. Dynein-2 complex is built around two copies of cytoplasmic dynein 2 heavy chain 1 (DYNC2H1). The C-terminal region forms the motor domain, which converts the energy from ATP hydrolysis into movement. Its N-terminal region forms the tail, an extended structure that binds the other subunits and holds the two heavy chains in a homodimer. Interacts with DYNC2H1 (via N-terminus); this interaction stabilizes the dynein-2 complex structure.

Its subcellular location is the cytoplasm. The protein resides in the cell projection. The protein localises to the cilium. It is found in the cytoskeleton. It localises to the cilium basal body. Its subcellular location is the cilium axoneme. The protein resides in the microtubule organizing center. The protein localises to the centrosome. In terms of biological role, acts as one of several non-catalytic accessory components of the cytoplasmic dynein 2 complex (dynein-2 complex), a motor protein complex that drives the movement of cargos along microtubules within cilia and flagella in concert with the intraflagellar transport (IFT) system, facilitating the assembly of these organelles. Involved in the regulation of ciliary length. The sequence is that of Cytoplasmic dynein 2 light intermediate chain 1 (Dync2li1) from Rattus norvegicus (Rat).